Consider the following 229-residue polypeptide: Peptidase E (229 aa).

Residues Ser120, Asp135, and His157 each act as charge relay system in the active site.

It belongs to the peptidase S51 family.

It localises to the cytoplasm. It carries out the reaction Dipeptidase E catalyzes the hydrolysis of dipeptides Asp-|-Xaa. It does not act on peptides with N-terminal Glu, Asn or Gln, nor does it cleave isoaspartyl peptides.. In terms of biological role, hydrolyzes dipeptides containing N-terminal aspartate residues. May play a role in allowing the cell to use peptide aspartate to spare carbon otherwise required for the synthesis of the aspartate family of amino acids. In Salmonella paratyphi A (strain AKU_12601), this protein is Peptidase E.